The following is a 230-amino-acid chain: Ribose-5-phosphate isomerase A (230 aa).

Substrate-binding positions include 31 to 34 (TGST), 88 to 91 (DGSD), and 101 to 104 (KGGG). The Proton acceptor role is filled by Glu110. Lys128 lines the substrate pocket.

The protein belongs to the ribose 5-phosphate isomerase family. Homodimer.

It catalyses the reaction aldehydo-D-ribose 5-phosphate = D-ribulose 5-phosphate. The protein operates within carbohydrate degradation; pentose phosphate pathway; D-ribose 5-phosphate from D-ribulose 5-phosphate (non-oxidative stage): step 1/1. Catalyzes the reversible conversion of ribose-5-phosphate to ribulose 5-phosphate. The protein is Ribose-5-phosphate isomerase A of Lactobacillus helveticus (strain DPC 4571).